The following is a 219-amino-acid chain: Pyridoxine/pyridoxamine 5'-phosphate oxidase (219 aa).

Residues 13-16 (RVEY) and K76 contribute to the substrate site. FMN-binding positions include 71-76 (RSVLCK), 86-87 (FT), K93, and Q115. Substrate contacts are provided by Y133, R137, and S141. FMN contacts are provided by residues 150-151 (QS) and W196. Residue 202–204 (RVH) coordinates substrate. R206 is a binding site for FMN.

It belongs to the pyridoxamine 5'-phosphate oxidase family. As to quaternary structure, homodimer. It depends on FMN as a cofactor.

The enzyme catalyses pyridoxamine 5'-phosphate + O2 + H2O = pyridoxal 5'-phosphate + H2O2 + NH4(+). It catalyses the reaction pyridoxine 5'-phosphate + O2 = pyridoxal 5'-phosphate + H2O2. It functions in the pathway cofactor metabolism; pyridoxal 5'-phosphate salvage; pyridoxal 5'-phosphate from pyridoxamine 5'-phosphate: step 1/1. The protein operates within cofactor metabolism; pyridoxal 5'-phosphate salvage; pyridoxal 5'-phosphate from pyridoxine 5'-phosphate: step 1/1. Its function is as follows. Catalyzes the oxidation of either pyridoxine 5'-phosphate (PNP) or pyridoxamine 5'-phosphate (PMP) into pyridoxal 5'-phosphate (PLP). The sequence is that of Pyridoxine/pyridoxamine 5'-phosphate oxidase from Mycobacterium leprae (strain TN).